The following is a 244-amino-acid chain: MGIGYGASDEQLEKQIGCVKYTLFCFNIVAWMISTALFALTVWLRAEPGFNDWLRILEAQSFYIGVYVLIGISIVMMAVSFLGCLSALMENTLALFVFVGTQVFGFIAIVAGSAVLLQFSTINSSLQPLLNVSLRGFVATSEYTYSNYVLTMIQENIGCCGATGPWDYLDLRQPLPSSCRDTVSGNAFFNGCVDELTWFFEGKTGWIVALAMTLGLLNVICAVMSFVLVQAVKKEEEQASNYRR.

At 1 to 22 (MGIGYGASDEQLEKQIGCVKYT) the chain is on the cytoplasmic side. A helical membrane pass occupies residues 23 to 43 (LFCFNIVAWMISTALFALTVW). The Extracellular portion of the chain corresponds to 44 to 61 (LRAEPGFNDWLRILEAQS). Residues 62–82 (FYIGVYVLIGISIVMMAVSFL) traverse the membrane as a helical segment. Residues 83–91 (GCLSALMEN) are Cytoplasmic-facing. Residues 92–112 (TLALFVFVGTQVFGFIAIVAG) traverse the membrane as a helical segment. The Extracellular portion of the chain corresponds to 113–206 (SAVLLQFSTI…TWFFEGKTGW (94 aa)). A helical transmembrane segment spans residues 207–227 (IVALAMTLGLLNVICAVMSFV). The Cytoplasmic segment spans residues 228 to 244 (LVQAVKKEEEQASNYRR).

Belongs to the tetraspanin (TM4SF) family. In terms of assembly, forms a complex with Ssk and mesh.

It is found in the apicolateral cell membrane. The protein resides in the cell junction. The protein localises to the septate junction. Its function is as follows. Required for assembly of smooth septate junctions (sSJs), together with Ssk and mesh. Important for barrier function of the midgut epithelium. This is Tetraspanin-2A from Drosophila melanogaster (Fruit fly).